A 362-amino-acid polypeptide reads, in one-letter code: Homeobox-leucine zipper protein HOX11 (362 aa).

The span at 27–45 (REEAAEAGRRDHEVRRELE) shows a compositional bias: basic and acidic residues. Residues 27 to 179 (REEAAEAGRR…DDGGSARKKL (153 aa)) are disordered. The span at 64–75 (LTLLPMVPGLGL) shows a compositional bias: low complexity. Over residues 126–135 (LSSSPNNSAG) the composition is skewed to polar residues. Positions 145–160 (HGLGGNDAAPGGGGGD) are enriched in gly residues. Positions 174–233 (SARKKLRLSKEQSAFLEESFKEHSTLNPKQKLALAKQLNLRPRQVEVWFQNRRARTKLKQ) form a DNA-binding region, homeobox. A leucine-zipper region spans residues 232–276 (KQTEVDCEYLKRCCETLTEENRRLQKELAELRALKTVHPFYMHLP). The interval 301-330 (AATSSTAAPPAAPSSGGIAATSSSAAAAAA) is disordered.

Belongs to the HD-ZIP homeobox family. Class II subfamily. As to expression, expressed in stems, leaf sheaths and blades and panicles.

The protein localises to the nucleus. Functionally, probable transcription factor. The sequence is that of Homeobox-leucine zipper protein HOX11 (HOX11) from Oryza sativa subsp. japonica (Rice).